Consider the following 99-residue polypeptide: Gibberellin-regulated protein 3 (99 aa).

Residues 1-26 (MAIFRSTLVLLLILFCLTTFELHVHA) form the signal peptide.

It belongs to the GASA family. Post-translationally, six disulfide bonds may be present. Expressed in siliques, dry seeds and vasculature of roots and rosette leaves.

The protein localises to the secreted. In terms of biological role, gibberellin-regulated protein that may function in hormonal controlled steps of development such as seed germination, flowering and seed maturation. The sequence is that of Gibberellin-regulated protein 3 (GASA3) from Arabidopsis thaliana (Mouse-ear cress).